A 149-amino-acid chain; its full sequence is Large ribosomal subunit protein bL9 (149 aa).

This sequence belongs to the bacterial ribosomal protein bL9 family.

Its function is as follows. Binds to the 23S rRNA. This Citrobacter koseri (strain ATCC BAA-895 / CDC 4225-83 / SGSC4696) protein is Large ribosomal subunit protein bL9.